The sequence spans 423 residues: Adenylosuccinate synthetase (423 aa).

The active-site Proton acceptor is aspartate 12. Mg(2+)-binding residues include aspartate 12 and glycine 39. Residues 37-40, threonine 129, arginine 143, asparagine 221, threonine 236, and arginine 300 each bind IMP; that span reads NAGH. Residue 39–41 coordinates GTP; sequence GHS. Catalysis depends on histidine 40, which acts as the Proton donor. 296–302 lines the substrate pocket; that stretch reads VSTGRKR. Residues arginine 302, 328–330, and 412–414 contribute to the GTP site; these read KLD and GTG.

It belongs to the adenylosuccinate synthetase family. In terms of assembly, homodimer. Requires Mg(2+) as cofactor.

It localises to the cytoplasm. The catalysed reaction is IMP + L-aspartate + GTP = N(6)-(1,2-dicarboxyethyl)-AMP + GDP + phosphate + 2 H(+). It participates in purine metabolism; AMP biosynthesis via de novo pathway; AMP from IMP: step 1/2. Its function is as follows. Plays an important role in the de novo pathway and in the salvage pathway of purine nucleotide biosynthesis. Catalyzes the first committed step in the biosynthesis of AMP from IMP. In Pyricularia oryzae (strain 70-15 / ATCC MYA-4617 / FGSC 8958) (Rice blast fungus), this protein is Adenylosuccinate synthetase.